A 127-amino-acid chain; its full sequence is uncharacterized protein (127 aa).

Over residues 1–13 the composition is skewed to polar residues; the sequence is MEAGNRSGTPQHR. A disordered region spans residues 1–26; the sequence is MEAGNRSGTPQHRQLSEIRQDLSSSP.

This is an uncharacterized protein from Saccharomyces cerevisiae (strain ATCC 204508 / S288c) (Baker's yeast).